The following is an 83-amino-acid chain: Large ribosomal subunit protein bL27 (83 aa).

Positions 1-25 are disordered; the sequence is MAHKKGQGASRNGRDSESKRLGLKV.

It belongs to the bacterial ribosomal protein bL27 family.

This is Large ribosomal subunit protein bL27 from Chlamydia trachomatis serovar L2 (strain ATCC VR-902B / DSM 19102 / 434/Bu).